A 487-amino-acid chain; its full sequence is Cobyric acid synthase (487 aa).

In terms of domain architecture, GATase cobBQ-type spans 249–435 (GIDIAIVRLP…IHGIFDEGDF (187 aa)). Cys330 acts as the Nucleophile in catalysis. His427 is an active-site residue.

It belongs to the CobB/CobQ family. CobQ subfamily.

It participates in cofactor biosynthesis; adenosylcobalamin biosynthesis. Functionally, catalyzes amidations at positions B, D, E, and G on adenosylcobyrinic A,C-diamide. NH(2) groups are provided by glutamine, and one molecule of ATP is hydrogenolyzed for each amidation. This is Cobyric acid synthase from Clostridium perfringens (strain SM101 / Type A).